We begin with the raw amino-acid sequence, 316 residues long: MSEQFQHVSVLLHESIDGLAIKPDGIYIDGTFGRGGHSRQILSRLGENGRLYSIDRDPQAIAEAKTITDPRFNIIHGPFSGLKGYVEELGLVGQIDGVLLDLGVSSPQLDDADRGFSFMKDGPLDMRMDPTSGMPVSQWLLTADVEDITWVIREFGEDKHAWRIAKGIVAYRDNEENEPLTRTGQLAKLISDVAPKNFKEKKHPATRTFQAFRIYINSELDEIDTALNGALDVFAEGGRLSVISFHSLEDRMVKHFIRKESRGPQVPHGIPLTENQIKALGSAKMKPIGKAIKPTVNEVDVNVRSRSSVLRIAERL.

S-adenosyl-L-methionine is bound by residues 35–37, Asp55, Phe79, Asp101, and Gln108; that span reads GGH.

It belongs to the methyltransferase superfamily. RsmH family.

Its subcellular location is the cytoplasm. It catalyses the reaction cytidine(1402) in 16S rRNA + S-adenosyl-L-methionine = N(4)-methylcytidine(1402) in 16S rRNA + S-adenosyl-L-homocysteine + H(+). Specifically methylates the N4 position of cytidine in position 1402 (C1402) of 16S rRNA. The chain is Ribosomal RNA small subunit methyltransferase H from Aliivibrio salmonicida (strain LFI1238) (Vibrio salmonicida (strain LFI1238)).